Reading from the N-terminus, the 148-residue chain is Ribonuclease H (148 aa).

Positions 1-141 (MKTVEIYTDG…ADELANLGVK (141 aa)) constitute an RNase H type-1 domain. Mg(2+)-binding residues include D9, E47, D69, and D133.

Belongs to the RNase H family. Monomer. The cofactor is Mg(2+).

Its subcellular location is the cytoplasm. It catalyses the reaction Endonucleolytic cleavage to 5'-phosphomonoester.. Endonuclease that specifically degrades the RNA of RNA-DNA hybrids. This is Ribonuclease H from Hahella chejuensis (strain KCTC 2396).